Reading from the N-terminus, the 170-residue chain is Large ribosomal subunit protein uL11 (170 aa).

Belongs to the universal ribosomal protein uL11 family. In terms of assembly, part of the ribosomal stalk of the 50S ribosomal subunit. Interacts with L10 and the large rRNA to form the base of the stalk. L10 forms an elongated spine to which L12 dimers bind in a sequential fashion forming a multimeric L10(L12)X complex.

In terms of biological role, forms part of the ribosomal stalk which helps the ribosome interact with GTP-bound translation factors. In Saccharolobus islandicus (strain Y.N.15.51 / Yellowstone #2) (Sulfolobus islandicus), this protein is Large ribosomal subunit protein uL11.